The sequence spans 455 residues: MPPQVIQQQQQSLASEMTARDRLTSYIYEYLQQTGASKTAETFKEEVLSTNPAAGLAAANSTKLSDKSFLLEWWLLFWDLYSAAPERRDAGGDPFSAEAKYFHEAMIGMPPGMNGHFAPPPMGMEMMGGHPGAFGGRFAPGRMPPGAMAPGGMPPGAFPMFPPDPRLQRMAPNQGMRMPPPPVGQPFPGAVGMPRPVGPGAPMDMSGMQRFDFMGGPPPGGGAQPFPGASGSGGMMPNGAHPHMSLNSPSMGVPPADMPPFMGMPPMPPTSSSAMPFGMSSDHQPMSAGPAAAAPGATTAGGPGTPGMIGSVPGPGSVPQVATTSVGSVGTPSSIGQQLHQPKQEITTNGEEIMKTEALTPTGGGGGGSVPPPPPAATAAVSMNGGGPGSAPGSAHSVNNNVNPGTPGSNPLSNPMSNPPLSSGPPPPGSNDAFGKDDNGEISKIREGLLDGFCA.

Residues 19 to 51 form the LisH domain; the sequence is ARDRLTSYIYEYLQQTGASKTAETFKEEVLSTN. 4 disordered regions span residues 217 to 249, 281 to 302, 314 to 343, and 357 to 442; these read PPPG…LNSP, SDHQ…TAGG, GPGS…HQPK, and EALT…NGEI. Composition is skewed to low complexity over residues 288–298 and 321–336; these read AGPAAAAPGAT and VATT…SSIG. Residues 396–406 are compositionally biased toward polar residues; it reads HSVNNNVNPGT. The span at 407-421 shows a compositional bias: low complexity; it reads PGSNPLSNPMSNPPL.

In terms of tissue distribution, ubiquitously expressed with higher expression in the head and tail ganglia, the vulva and PLM neurons.

The protein resides in the cytoplasm. It is found in the nucleus. In terms of biological role, involved cell autonomously in PLM neuron pre-synaptic differentiation by negatively regulating prk-2 expression and in neurite branch positioning. This chain is Single-stranded DNA-binding protein homolog sam-10, found in Caenorhabditis elegans.